The primary structure comprises 290 residues: S-adenosylmethionine decarboxylase proenzyme (290 aa).

The active-site Schiff-base intermediate with substrate; via pyruvic acid is Ser-138. Ser-138 is subject to Pyruvic acid (Ser); by autocatalysis. The active-site Proton acceptor; for processing activity is the His-143. Cys-166 serves as the catalytic Proton donor; for catalytic activity.

It belongs to the prokaryotic AdoMetDC family. Type 2 subfamily. As to quaternary structure, heterooctamer of four alpha and four beta chains arranged as a tetramer of alpha/beta heterodimers. Pyruvate is required as a cofactor. In terms of processing, is synthesized initially as an inactive proenzyme. Formation of the active enzyme involves a self-maturation process in which the active site pyruvoyl group is generated from an internal serine residue via an autocatalytic post-translational modification. Two non-identical subunits are generated from the proenzyme in this reaction, and the pyruvate is formed at the N-terminus of the alpha chain, which is derived from the carboxyl end of the proenzyme. The post-translation cleavage follows an unusual pathway, termed non-hydrolytic serinolysis, in which the side chain hydroxyl group of the serine supplies its oxygen atom to form the C-terminus of the beta chain, while the remainder of the serine residue undergoes an oxidative deamination to produce ammonia and the pyruvoyl group blocking the N-terminus of the alpha chain.

It catalyses the reaction S-adenosyl-L-methionine + H(+) = S-adenosyl 3-(methylsulfanyl)propylamine + CO2. The protein operates within amine and polyamine biosynthesis; S-adenosylmethioninamine biosynthesis; S-adenosylmethioninamine from S-adenosyl-L-methionine: step 1/1. Functionally, catalyzes the decarboxylation of S-adenosylmethionine to S-adenosylmethioninamine (dcAdoMet), the propylamine donor required for the synthesis of the polyamines spermine and spermidine from the diamine putrescine. The polypeptide is S-adenosylmethionine decarboxylase proenzyme (Heliobacterium modesticaldum (strain ATCC 51547 / Ice1)).